The following is a 458-amino-acid chain: UDP-N-acetylmuramate--L-alanine ligase (458 aa).

ATP is bound at residue glycine 115–threonine 121.

It belongs to the MurCDEF family.

It is found in the cytoplasm. It catalyses the reaction UDP-N-acetyl-alpha-D-muramate + L-alanine + ATP = UDP-N-acetyl-alpha-D-muramoyl-L-alanine + ADP + phosphate + H(+). It participates in cell wall biogenesis; peptidoglycan biosynthesis. Cell wall formation. The chain is UDP-N-acetylmuramate--L-alanine ligase from Anaeromyxobacter sp. (strain Fw109-5).